Reading from the N-terminus, the 406-residue chain is Purine nucleoside permease (406 aa).

The N-terminal stretch at 1–22 (MKLSTLFTLATTISTLTTFTIA) is a signal peptide.

It belongs to the NUP family.

Mammalian nucleoside transport inhibitors dipyridamole and NBMPR inhibit adenosine transport by NUP. Nucleoside permease that transports adenosine and guanosine. Does not show any transport activities towards cytidine, adenine, guanine, uridine, and uracil. The sequence is that of Purine nucleoside permease from Candida albicans (Yeast).